The sequence spans 1208 residues: Chromosome partition protein Smc (1208 aa).

Residue 32-39 (PNGCGKSN) participates in ATP binding. Coiled-coil stretches lie at residues 170-205 (VTKY…GERI), 239-504 (EARA…ARVQ), and 694-1054 (VIER…QLQD).

This sequence belongs to the SMC family. In terms of assembly, homodimer.

The protein resides in the cytoplasm. Required for chromosome condensation and partitioning. This chain is Chromosome partition protein Smc, found in Thauera aminoaromatica.